The following is a 576-amino-acid chain: Proline--tRNA ligase (576 aa).

Belongs to the class-II aminoacyl-tRNA synthetase family. ProS type 1 subfamily. In terms of assembly, homodimer.

The protein localises to the cytoplasm. The enzyme catalyses tRNA(Pro) + L-proline + ATP = L-prolyl-tRNA(Pro) + AMP + diphosphate. Catalyzes the attachment of proline to tRNA(Pro) in a two-step reaction: proline is first activated by ATP to form Pro-AMP and then transferred to the acceptor end of tRNA(Pro). As ProRS can inadvertently accommodate and process non-cognate amino acids such as alanine and cysteine, to avoid such errors it has two additional distinct editing activities against alanine. One activity is designated as 'pretransfer' editing and involves the tRNA(Pro)-independent hydrolysis of activated Ala-AMP. The other activity is designated 'posttransfer' editing and involves deacylation of mischarged Ala-tRNA(Pro). The misacylated Cys-tRNA(Pro) is not edited by ProRS. The polypeptide is Proline--tRNA ligase (Pelobacter propionicus (strain DSM 2379 / NBRC 103807 / OttBd1)).